We begin with the raw amino-acid sequence, 130 residues long: C-C motif chemokine 28 (130 aa).

Positions 1-16 (MQQAGLTLMAVAVCVA) are cleaved as a signal peptide. 2 disulfides stabilise this stretch: Cys30–Cys58 and Cys31–Cys73. Asn78 is a glycosylation site (N-linked (GlcNAc...) asparagine). The interval 92–130 (KNGRENVCSGKKQPSRKDRKGHTTRKHRTRGTHRHEASR) is disordered. The segment covering 104–124 (QPSRKDRKGHTTRKHRTRGTH) has biased composition (basic residues).

It belongs to the intercrine beta (chemokine CC) family. In terms of tissue distribution, mainly expressed in testis, epithelial cells of normal colon, kidney, Peyer patches, lymph nodes. Also found in lower levels in brain, spleen and lung.

It localises to the secreted. Chemotactic for resting CD4, CD8 T-cells and eosinophils. Binds to CCR10 and induces calcium mobilization in a dose-dependent manner. The chain is C-C motif chemokine 28 (Ccl28) from Mus musculus (Mouse).